Consider the following 455-residue polypeptide: Nuclear distribution protein nudF (455 aa).

The region spanning 9 to 41 (QAEELHKSMIAYLVASDLPDTAAALRREVNLSE) is the LisH domain. Residues 61 to 88 (TSIARLQKKIMDLESRNATLQSELDNST) are a coiled coil. 8 WD repeats span residues 113 to 154 (SHRD…RTLK), 156 to 196 (HTRA…KNIR), 200 to 239 (GHDH…CVKT), 242 to 281 (GHTD…NIEH), 287 to 347 (GHEN…LMTL), 349 to 388 (GHDS…KCVK), 392 to 438 (AHES…IQMR), and 440 to 455 (VVAT…IFAG). A disordered region spans residues 408–431 (KNVPGGDGAAEGEGNDKNGAGSEN).

The protein belongs to the WD repeat LIS1/nudF family. Self-associates. Interacts with nudE and dynein.

The protein localises to the cytoplasm. It localises to the cytoskeleton. It is found in the spindle pole. In terms of biological role, positively regulates the activity of the minus-end directed microtubule motor protein dynein. May enhance dynein-mediated microtubule sliding by targeting dynein to the microtubule plus end. Required for nuclear migration during vegetative growth as well as development. Required for retrograde early endosome (EE) transport from the hyphal tip. Required for localization of dynein to the mitotic spindle poles. Recruits additional proteins to the dynein complex at SPBs. The polypeptide is Nuclear distribution protein nudF (Aspergillus flavus (strain ATCC 200026 / FGSC A1120 / IAM 13836 / NRRL 3357 / JCM 12722 / SRRC 167)).